Here is a 196-residue protein sequence, read N- to C-terminus: HTH-type transcriptional regulator UidR (196 aa).

An HTH tetR-type domain is found at 10–70 (QPTRTRILNA…AIILQDQERA (61 aa)). The segment at residues 33 to 52 (SMKAICKSCAISPGTLYHHF) is a DNA-binding region (H-T-H motif).

In terms of biological role, repressor for the uidRABC (gusRABC) operon. This is HTH-type transcriptional regulator UidR (uidR) from Escherichia coli O157:H7.